A 480-amino-acid polypeptide reads, in one-letter code: EGF-like repeat and discoidin I-like domain-containing protein 3 (480 aa).

The first 23 residues, 1 to 23 (MKHLVAAWLLVGLSLGVPQFGKG), serve as a signal peptide directing secretion. The EGF-like 1 domain occupies 24–60 (DICNPNPCENGGICLSGLADDSFSCECPEGFAGPNCS). Disulfide bonds link C26–C37, C31–C48, and C50–C59. T73 is a glycosylation site (O-linked (GalNAc...) threonine). EGF-like domains are found at residues 74-117 (SAGP…IHCQ) and 119-155 (NINE…RNCQ). 3 disulfide bridges follow: C78-C89, C83-C105, and C107-C116. T88 carries an O-linked (Fuc...) threonine glycan. The short motif at 96-98 (RGD) is the Cell attachment site element. 3 residues coordinate Ca(2+): N119, I120, and E122. 6 disulfides stabilise this stretch: C123/C134, C128/C143, C145/C154, C158/C314, C301/C305, and C319/C476. Ca(2+) contacts are provided by D136 and L137. N140 carries N-linked (GlcNAc...) asparagine glycosylation. 2 F5/8 type C domains span residues 158 to 314 (CSGP…LLGC) and 319 to 476 (CSEP…LLGC).

Expressed in angioblasts and early endothelial cells. By embryonic day 13.5, also expressed in a restricted group of non-endothelial cells including chondrocytes and retinal neurons.

It localises to the secreted. Promotes adhesion of endothelial cells through interaction with the alpha-v/beta-3 integrin receptor. Inhibits formation of vascular-like structures. May be involved in regulation of vascular morphogenesis of remodeling in embryonic development. This Mus musculus (Mouse) protein is EGF-like repeat and discoidin I-like domain-containing protein 3 (Edil3).